The chain runs to 292 residues: Short chain dehydrogenase/reductase CPUR_05418 (292 aa).

NADP(+) contacts are provided by Ile44 and Arg156. Active-site proton donor residues include Ser172 and Tyr186. Residues Tyr186, Lys190, Ile221, and Thr223 each coordinate NADP(+). The Lowers pKa of active site Tyr role is filled by Lys190.

Belongs to the short-chain dehydrogenases/reductases (SDR) family.

The protein operates within secondary metabolite biosynthesis. Short chain dehydrogenase/reductase; part of the ergochrome gene cluster responsible for the typical purple-black color of the ergot sclerotia. The ergochrome gene cluster produces several ergot pigments including the yellow ergochrome secalonic acid and its derivatives, as well as the red anthraquinones endocrocin and clavorubin. The pathway begins with the synthesis of atrochrysone thioester by the polyketide synthase (PKS) CPUR_05437. The atrochrysone carboxyl ACP thioesterase CPUR_05436 then breaks the thioester bond and releases the atrochrysone carboxylic acid from CPUR_05437. The atrochrysone carboxylic acid is then converted to atrochrysone which is further transformed into emodin anthrone. The next step is performed by the anthrone oxygenase CPUR_05434 that catalyzes the oxidation of emodinanthrone to emodin. Emodin is further modified to yield monodictyphenone via several steps involving CPUR_05427, CPUR_05428, CPUR_05429 and CPUR_05430. The short chain dehydrogenase/reductase CPUR_05418 then catalyzes the C-5 ketoreduction to give the xanthone skeleton of the monomeric units. Ergochromes formation requires further dimerization steps of different xanthone units, probably catalyzed by the cytochrome P450 monooxygenase CPUR_05419. CPUR_05425, CPUR_05426 and CPUR_05431 are unique to Claviceps, thus it is likely that they are involved in further modification of xanthone units or in their dimerization. The yellow ergochromes and the red anthraquinone pigments endocrocin and clavorubin are products from the same PKS derived precursors and the latter are likely shunt products in the pathway of xanthone biosynthesis. It is proposed that atrochrysone carboxylic acid released from the PKS CPUR_05437 can also be converted to endocrocin anthrone which is further oxidized into endocrocin by CPUR_05435. Endocrocin could be then modified to clavorubin, possibly by CPUR_05423 and CPUR_05431. Clavorubin is the principal anthraquinone metabolite produced by the cluster with a much higher yield compared to endocrocin. In Claviceps purpurea (strain 20.1) (Ergot fungus), this protein is Short chain dehydrogenase/reductase CPUR_05418.